Here is a 538-residue protein sequence, read N- to C-terminus: CTP synthase (538 aa).

Positions 1–269 (MSPRKYVIVT…ARLVERRLFG (269 aa)) are amidoligase domain. Ser-15 lines the CTP pocket. Ser-15 is a UTP binding site. An ATP-binding site is contributed by 16–21 (SVGKGL). An L-glutamine-binding site is contributed by Tyr-56. Position 73 (Asp-73) interacts with ATP. The Mg(2+) site is built by Asp-73 and Glu-143. CTP contacts are provided by residues 150-152 (DIE), 190-195 (KTKPVQ), and Lys-226. UTP is bound by residues 190 to 195 (KTKPVQ) and Lys-226. Residues 294–538 (KVAMVGKYTK…FVTAVARLRG (245 aa)) enclose the Glutamine amidotransferase type-1 domain. Gly-358 lines the L-glutamine pocket. Residue Cys-385 is the Nucleophile; for glutamine hydrolysis of the active site. Residues 386–389 (FGMQ), Glu-409, and Arg-466 each bind L-glutamine. Active-site residues include His-512 and Glu-514.

This sequence belongs to the CTP synthase family. As to quaternary structure, homotetramer.

It carries out the reaction UTP + L-glutamine + ATP + H2O = CTP + L-glutamate + ADP + phosphate + 2 H(+). It catalyses the reaction L-glutamine + H2O = L-glutamate + NH4(+). The enzyme catalyses UTP + NH4(+) + ATP = CTP + ADP + phosphate + 2 H(+). The protein operates within pyrimidine metabolism; CTP biosynthesis via de novo pathway; CTP from UDP: step 2/2. Its activity is regulated as follows. Allosterically activated by GTP, when glutamine is the substrate; GTP has no effect on the reaction when ammonia is the substrate. The allosteric effector GTP functions by stabilizing the protein conformation that binds the tetrahedral intermediate(s) formed during glutamine hydrolysis. Inhibited by the product CTP, via allosteric rather than competitive inhibition. In terms of biological role, catalyzes the ATP-dependent amination of UTP to CTP with either L-glutamine or ammonia as the source of nitrogen. Regulates intracellular CTP levels through interactions with the four ribonucleotide triphosphates. This chain is CTP synthase, found in Aeropyrum pernix (strain ATCC 700893 / DSM 11879 / JCM 9820 / NBRC 100138 / K1).